The chain runs to 907 residues: Leucine-rich repeat-containing G-protein coupled receptor 5 (907 aa).

The N-terminal stretch at 1 to 21 (MDTSRVRMLLSLLALLQLVAA) is a signal peptide. Residues 22 to 561 (GSPPRPDTMP…EHLFGSWLIR (540 aa)) are Extracellular-facing. Residues 33-64 (GCPSYCHCELDGRMLLRVDCSDLGLSELPSNL) form the LRRNT domain. Intrachain disulfides connect Cys34–Cys40 and Cys38–Cys52. LRR repeat units lie at residues 44–64 (GRML…PSNL), 65–88 (SVFT…LLHR), 89–112 (LRFL…AFAG), 114–136 (HSLK…ALQN), 137–160 (LRSL…CFSG), 162–184 (HSLR…AFRS), 186–208 (SALQ…AFGN), 209–232 (LSSL…CFDG), 233–256 (LHSL…IKTL), 257–279 (SNLK…AFVG), 281–303 (PSLI…AFQH), 304–327 (LPEL…LTGT), 328–350 (ATLE…VCDQ), 351–375 (LPNL…GCQK), 377–396 (QKID…TFQQ), 397–420 (LFNL…AFST), and 422–444 (PSLI…GLHG). N-linked (GlcNAc...) asparagine glycosylation is found at Asn63 and Asn77. Residue Asn208 is glycosylated (N-linked (GlcNAc...) asparagine). Cysteines 348 and 373 form a disulfide. Cys479 and Cys541 form a disulfide bridge. The chain crosses the membrane as a helical span at residues 562-582 (IGVWTTAVLALSCNALVAFTV). The LRR 18 repeat unit spans residues 564–585 (VWTTAVLALSCNALVAFTVFRT). The Cytoplasmic segment spans residues 583 to 595 (FRTPLYISSIKLL). Residues 596-616 (IGVIAVVDILMGVSSAILAVV) traverse the membrane as a helical segment. At 617–638 (DTFTFGSFAQHGAWWEGGIGCQ) the chain is on the extracellular side. Cysteines 637 and 712 form a disulfide. A helical transmembrane segment spans residues 639–659 (IVGFLSIFASESSVFLLTLAA). Residues 660-682 (LERGFSVKCSSKFEMKAPLSSLK) lie on the Cytoplasmic side of the membrane. A helical transmembrane segment spans residues 683 to 703 (AIILLCVLLALTIATVPLLGG). At 704–723 (SEYNASPLCLPLPFGEPSTT) the chain is on the extracellular side. A helical membrane pass occupies residues 724–744 (GYMVALVLLNSLCFLIMTIAY). The Cytoplasmic portion of the chain corresponds to 745–775 (TRLYCSLEKGELENLWDCSMVKHTALLLFTN). Residues 776–796 (CILYCPVAFLSFSSLLNLTFI) form a helical membrane-spanning segment. Residues 797 to 802 (SPEVIK) lie on the Extracellular side of the membrane. Residues 803–823 (FILLVIVPLPACLNPLLYIVF) form a helical membrane-spanning segment. Residues 824–907 (NPHFKEDMGS…LSSVAFVPCL (84 aa)) are Cytoplasmic-facing.

Belongs to the G-protein coupled receptor 1 family. In terms of assembly, identified in a complex composed of RNF43, LGR5 and RSPO1. Also interacts with other R-spondin ligands, including RSPO2, RSPO3 and RSPO4.

Its subcellular location is the cell membrane. It localises to the golgi apparatus. It is found in the trans-Golgi network membrane. Receptor for R-spondins that potentiates the canonical Wnt signaling pathway and acts as a stem cell marker of the intestinal epithelium and the hair follicle. Upon binding to R-spondins (RSPO1, RSPO2, RSPO3 or RSPO4), associates with phosphorylated LRP6 and frizzled receptors that are activated by extracellular Wnt receptors, triggering the canonical Wnt signaling pathway to increase expression of target genes. In contrast to classical G-protein coupled receptors, does not activate heterotrimeric G-proteins to transduce the signal. Involved in the development and/or maintenance of the adult intestinal stem cells during postembryonic development. The chain is Leucine-rich repeat-containing G-protein coupled receptor 5 (Lgr5) from Rattus norvegicus (Rat).